We begin with the raw amino-acid sequence, 441 residues long: Vacuolar cation/proton exchanger 2 (441 aa).

Residues 1-69 lie on the Cytoplasmic side of the membrane; that stretch reads MSCCKVPVLI…PKNSVLNSIK (69 aa). A helical transmembrane segment spans residues 70–90; that stretch reads IVIFCNKLNLLLPFGPLAILV. At 91–97 the chain is on the extracellular side; that stretch reads HYMIDSK. The chain crosses the membrane as a helical span at residues 98–118; the sequence is GWVFLLTLVGITPLAERLGYA. Residues 119 to 129 lie on the Cytoplasmic side of the membrane; that stretch reads TEQLACYTGPT. The helical transmembrane segment at 130–150 threads the bilayer; that stretch reads VGGLLNATFGNVTELIISIFA. The cation selection stretch occupies residues 139 to 174; the sequence is GNVTELIISIFALKNGMIRVVQLTLLGSILSNMLLV. Residues 151 to 166 are Extracellular-facing; that stretch reads LKNGMIRVVQLTLLGS. A helical transmembrane segment spans residues 167–187; that stretch reads ILSNMLLVLGCAFFCGGLVFY. Over 188 to 196 the chain is Cytoplasmic; that stretch reads QKDQVFDKG. Residues 197–217 form a helical membrane-spanning segment; that stretch reads IATVNSGLLLMAVMGILFPAV. Residues 218–231 are Extracellular-facing; it reads LHYTHSEVHAGSSE. The helical transmembrane segment at 232–252 threads the bilayer; it reads LALSRFSSCIMLIAYAAYLFF. The Cytoplasmic portion of the chain corresponds to 253 to 286; that stretch reads QLKSQSNSYSPLDEESNQNEETSAEDEDPEISKW. The chain crosses the membrane as a helical span at residues 287–307; it reads EAIIWLSILTAWVSLLSGYLV. The Extracellular segment spans residues 308-311; that stretch reads DAIE. A helical transmembrane segment spans residues 312 to 332; sequence GASVSWNIPIAFISTILLPIV. Residues 333-354 lie on the Cytoplasmic side of the membrane; that stretch reads GNAAEHAGAIMFAMKDKLDLSL. The cation selection stretch occupies residues 333 to 368; that stretch reads GNAAEHAGAIMFAMKDKLDLSLGVAIGSSIQISMFA. A helical membrane pass occupies residues 355 to 375; sequence GVAIGSSIQISMFAVPFCVVI. Topologically, residues 376 to 384 are extracellular; the sequence is GWMMGQQMD. Residues 385-405 traverse the membrane as a helical segment; sequence LNFQLFETAMLFITVIVVAFF. At 406-412 the chain is on the cytoplasmic side; sequence LQEGSSN. The chain crosses the membrane as a helical span at residues 413–433; it reads YFKGLMLILCYLIVAASFFVH. Residues 434–441 are Extracellular-facing; the sequence is EDPHQDGI.

It belongs to the Ca(2+):cation antiporter (CaCA) (TC 2.A.19) family. Cation/proton exchanger (CAX) subfamily.

The protein localises to the vacuole membrane. With respect to regulation, inhibited by excess of Ca(2+) and Cd(2+), Mn(2+), and Zn(2+). Functionally, vacuolar cation/proton exchanger (CAX). Translocates Ca(2+) and other metal ions into vacuoles using the proton gradient formed by H(+)-ATPase and H(+)-pyrophosphatase. In Arabidopsis thaliana (Mouse-ear cress), this protein is Vacuolar cation/proton exchanger 2 (CAX2).